The chain runs to 902 residues: Respiratory burst oxidase homolog protein A (902 aa).

The Cytoplasmic portion of the chain corresponds to 1 to 344 (MMNRSEMQKL…KYFLFDNWKR (344 aa)). Disordered stretches follow at residues 63-87 (KSPN…RSGR) and 107-130 (ASSV…RRSK). Over residues 74–87 (YEDQSLLRQGRSGR) the composition is skewed to polar residues. The segment covering 107–116 (ASSVSSSSAR) has biased composition (low complexity). EF-hand-like stretches follow at residues 163 to 173 (TMTTNGLLHRS) and 198 to 209 (ENVSGDSININE). EF-hand domains are found at residues 221–256 (DFDS…SASA) and 265–300 (QADE…APMQ). Residues Asp-234, Asp-236, Asp-238, Arg-240, and Glu-245 each contribute to the Ca(2+) site. 2 positions are modified to phosphoserine: Ser-311 and Ser-315. The chain crosses the membrane as a helical span at residues 345–365 (VWVMALWIGAMAGLFTWKFME). The Extracellular segment spans residues 366-380 (YRKRSAYEVMGVCVC). The chain crosses the membrane as a helical span at residues 381 to 401 (IAKGAAETLKLNMAMILLPVC). The Ferric oxidoreductase domain maps to 383–540 (KGAAETLKLN…LFVIVYSLLV (158 aa)). Residues 402–428 (RNTITWLRTKTKLSAIVPFDDSLNFHK) are Cytoplasmic-facing. A helical membrane pass occupies residues 429–449 (VIAIGISVGVGIHATSHLACD). At 450–484 (FPRLIAADEDQYEPMEKYFGPQTKRYLDFVQSVEG) the chain is on the extracellular side. Residues 485–505 (VTGIGMVVLMTIAFTLATTWF) form a helical membrane-spanning segment. Residues 506-529 (RRNKLNLPGPLKKITGFNAFWYSH) are Cytoplasmic-facing. A helical transmembrane segment spans residues 530 to 550 (HLFVIVYSLLVVHGFYVYLII). At 551-709 (EPWYKKTTWM…PAQDYKKFEV (159 aa)) the chain is on the extracellular side. One can recognise an FAD-binding FR-type domain in the interval 575–703 (IRAFRSSVEA…DGPYGAPAQD (129 aa)). Residues 710–730 (VLLVGLGIGATPMISIVSDII) traverse the membrane as a helical segment. The Cytoplasmic portion of the chain corresponds to 731–902 (NNLKGVEEGS…TKFIFHKENF (172 aa)). The segment at 738-760 (EGSNRRQSPIHNMVTPPVSPSRK) is disordered.

The protein belongs to the RBOH (TC 5.B.1.3) family. Monomer and homodimer.

The protein resides in the membrane. Calcium-dependent NADPH oxidase that generates superoxide. This chain is Respiratory burst oxidase homolog protein A (RBOHA), found in Arabidopsis thaliana (Mouse-ear cress).